We begin with the raw amino-acid sequence, 344 residues long: Protein RecA (344 aa).

64-71 contacts ATP; sequence GPESSGKT.

The protein belongs to the RecA family.

It is found in the cytoplasm. Functionally, can catalyze the hydrolysis of ATP in the presence of single-stranded DNA, the ATP-dependent uptake of single-stranded DNA by duplex DNA, and the ATP-dependent hybridization of homologous single-stranded DNAs. It interacts with LexA causing its activation and leading to its autocatalytic cleavage. This is Protein RecA from Paramagnetospirillum magnetotacticum (Aquaspirillum magnetotacticum).